Consider the following 343-residue polypeptide: L-threonine 3-dehydrogenase (343 aa).

Cysteine 38 is a Zn(2+) binding site. Catalysis depends on charge relay system residues threonine 40 and histidine 43. Zn(2+) contacts are provided by histidine 63, glutamate 64, cysteine 93, cysteine 96, cysteine 99, and cysteine 107. Residues isoleucine 175, aspartate 195, arginine 200, 262–264 (LGI), and 286–287 (IY) each bind NAD(+).

Belongs to the zinc-containing alcohol dehydrogenase family. In terms of assembly, homotetramer. Zn(2+) serves as cofactor.

The protein resides in the cytoplasm. It catalyses the reaction L-threonine + NAD(+) = (2S)-2-amino-3-oxobutanoate + NADH + H(+). It functions in the pathway amino-acid degradation; L-threonine degradation via oxydo-reductase pathway; glycine from L-threonine: step 1/2. In terms of biological role, catalyzes the NAD(+)-dependent oxidation of L-threonine to 2-amino-3-ketobutyrate. This chain is L-threonine 3-dehydrogenase, found in Burkholderia thailandensis (strain ATCC 700388 / DSM 13276 / CCUG 48851 / CIP 106301 / E264).